A 70-amino-acid polypeptide reads, in one-letter code: Conotoxin Lt11.2 (70 aa).

An N-terminal signal peptide occupies residues Met-1–Ala-26. Disulfide bonds link Cys-27–Cys-41, Cys-34–Cys-46, Cys-40–Cys-50, and Cys-45–Cys-54. Pro-57 bears the Proline amide mark. The propeptide occupies Glu-61–Arg-70.

The protein belongs to the conotoxin I2 superfamily. In terms of tissue distribution, expressed by the venom duct.

Its subcellular location is the secreted. This chain is Conotoxin Lt11.2, found in Conus litteratus (Lettered cone).